The primary structure comprises 234 residues: Adenosine 5'-phosphosulfate reductase (234 aa).

Residues Cys-120, Cys-121, Cys-203, and Cys-206 each coordinate [4Fe-4S] cluster. Cys-229 functions as the Nucleophile; cysteine thiosulfonate intermediate in the catalytic mechanism.

It belongs to the PAPS reductase family. CysH subfamily. [4Fe-4S] cluster is required as a cofactor.

The protein localises to the cytoplasm. It carries out the reaction [thioredoxin]-disulfide + sulfite + AMP + 2 H(+) = adenosine 5'-phosphosulfate + [thioredoxin]-dithiol. It functions in the pathway sulfur metabolism; hydrogen sulfide biosynthesis; sulfite from sulfate. In terms of biological role, catalyzes the formation of sulfite from adenosine 5'-phosphosulfate (APS) using thioredoxin as an electron donor. This chain is Adenosine 5'-phosphosulfate reductase, found in Bacillus cytotoxicus (strain DSM 22905 / CIP 110041 / 391-98 / NVH 391-98).